The chain runs to 294 residues: tRNA pseudouridine synthase B (294 aa).

Catalysis depends on Asp-39, which acts as the Nucleophile.

This sequence belongs to the pseudouridine synthase TruB family. Type 1 subfamily.

It carries out the reaction uridine(55) in tRNA = pseudouridine(55) in tRNA. In terms of biological role, responsible for synthesis of pseudouridine from uracil-55 in the psi GC loop of transfer RNAs. This chain is tRNA pseudouridine synthase B, found in Streptococcus pyogenes serotype M2 (strain MGAS10270).